Consider the following 120-residue polypeptide: Chaperonin GroEL (120 aa).

ATP is bound at residue 23-27 (DGTTT).

It belongs to the chaperonin (HSP60) family. In terms of assembly, forms a cylinder of 14 subunits composed of two heptameric rings stacked back-to-back. Interacts with the co-chaperonin GroES.

It is found in the cytoplasm. The catalysed reaction is ATP + H2O + a folded polypeptide = ADP + phosphate + an unfolded polypeptide.. In terms of biological role, together with its co-chaperonin GroES, plays an essential role in assisting protein folding. The GroEL-GroES system forms a nano-cage that allows encapsulation of the non-native substrate proteins and provides a physical environment optimized to promote and accelerate protein folding. This is Chaperonin GroEL from Mycolicibacter nonchromogenicus (Mycobacterium nonchromogenicum).